A 278-amino-acid chain; its full sequence is Large ribosomal subunit protein uL2 (278 aa).

Disordered regions lie at residues 1-53 (MAIR…TTRH) and 224-278 (VVMN…NKKR). Residues 23–33 (EITRSTPEKSL) show a composition bias toward basic and acidic residues. Positions 258–267 (RNPNRYSNNM) are enriched in polar residues. Over residues 269 to 278 (VRRRRPNKKR) the composition is skewed to basic residues.

This sequence belongs to the universal ribosomal protein uL2 family. In terms of assembly, part of the 50S ribosomal subunit. Forms a bridge to the 30S subunit in the 70S ribosome.

In terms of biological role, one of the primary rRNA binding proteins. Required for association of the 30S and 50S subunits to form the 70S ribosome, for tRNA binding and peptide bond formation. It has been suggested to have peptidyltransferase activity; this is somewhat controversial. Makes several contacts with the 16S rRNA in the 70S ribosome. The chain is Large ribosomal subunit protein uL2 from Corynebacterium aurimucosum (strain ATCC 700975 / DSM 44827 / CIP 107346 / CN-1) (Corynebacterium nigricans).